Consider the following 356-residue polypeptide: 1,2-phenylacetyl-CoA epoxidase, subunit E (356 aa).

Residues 2 to 106 form the FAD-binding FR-type domain; the sequence is TTFHSLTVAK…MVPQGHFGYQ (105 aa). The oxidoreductase stretch occupies residues 112-228; sequence QGRYLAIAAG…AAMMDDAETA (117 aa). Positions 262–354 constitute a 2Fe-2S ferredoxin-type domain; it reads QKVTVRQDGR…DVVVDFDAKG (93 aa). Residues Cys-299, Cys-304, Cys-307, and Cys-337 each contribute to the [2Fe-2S] cluster site.

The protein in the N-terminal section; belongs to the FAD-binding oxidoreductase type 6 family. It depends on [2Fe-2S] cluster as a cofactor. FAD serves as cofactor.

Its pathway is aromatic compound metabolism; phenylacetate degradation. Its function is as follows. Component of 1,2-phenylacetyl-CoA epoxidase multicomponent enzyme system which catalyzes the reduction of phenylacetyl-CoA (PA-CoA) to form 1,2-epoxyphenylacetyl-CoA. The subunit E is a reductase with a preference for NADPH and FAD, capable of reducing cytochrome c. The protein is 1,2-phenylacetyl-CoA epoxidase, subunit E (paaE) of Escherichia coli (strain K12).